The primary structure comprises 248 residues: Protein maestro (248 aa).

A disordered region spans residues 1–20 (MDQRQRRILGQPLSIPTSQP). HEAT repeat units lie at residues 44–79 (EPLK…AREA) and 128–163 (SFFI…AAFA).

The protein localises to the nucleus. Its subcellular location is the nucleolus. The chain is Protein maestro (MRO) from Macaca fascicularis (Crab-eating macaque).